A 253-amino-acid polypeptide reads, in one-letter code: Imidazole glycerol phosphate synthase subunit HisF (253 aa).

Active-site residues include D11 and D130.

Belongs to the HisA/HisF family. Heterodimer of HisH and HisF.

Its subcellular location is the cytoplasm. It catalyses the reaction 5-[(5-phospho-1-deoxy-D-ribulos-1-ylimino)methylamino]-1-(5-phospho-beta-D-ribosyl)imidazole-4-carboxamide + L-glutamine = D-erythro-1-(imidazol-4-yl)glycerol 3-phosphate + 5-amino-1-(5-phospho-beta-D-ribosyl)imidazole-4-carboxamide + L-glutamate + H(+). It functions in the pathway amino-acid biosynthesis; L-histidine biosynthesis; L-histidine from 5-phospho-alpha-D-ribose 1-diphosphate: step 5/9. Functionally, IGPS catalyzes the conversion of PRFAR and glutamine to IGP, AICAR and glutamate. The HisF subunit catalyzes the cyclization activity that produces IGP and AICAR from PRFAR using the ammonia provided by the HisH subunit. The protein is Imidazole glycerol phosphate synthase subunit HisF of Cereibacter sphaeroides (strain KD131 / KCTC 12085) (Rhodobacter sphaeroides).